A 329-amino-acid polypeptide reads, in one-letter code: D-alanine--D-alanine ligase (329 aa).

In terms of domain architecture, ATP-grasp spans 120 to 326 (KLWLSAIGIP…FADYLEQILR (207 aa)). 150–205 (ALAKWGKVFIKAASQGSSVGCYSASNEADLVKGIADAFGYSEQVLIEKAVKPRELE) provides a ligand contact to ATP. Mg(2+) is bound by residues aspartate 280, glutamate 293, and asparagine 295.

This sequence belongs to the D-alanine--D-alanine ligase family. Mg(2+) is required as a cofactor. Requires Mn(2+) as cofactor.

It localises to the cytoplasm. It catalyses the reaction 2 D-alanine + ATP = D-alanyl-D-alanine + ADP + phosphate + H(+). It functions in the pathway cell wall biogenesis; peptidoglycan biosynthesis. Its function is as follows. Cell wall formation. This Aeromonas hydrophila subsp. hydrophila (strain ATCC 7966 / DSM 30187 / BCRC 13018 / CCUG 14551 / JCM 1027 / KCTC 2358 / NCIMB 9240 / NCTC 8049) protein is D-alanine--D-alanine ligase.